A 180-amino-acid chain; its full sequence is ATP-dependent protease subunit HslV (180 aa).

The active site involves threonine 5. Residues glycine 165, cysteine 168, and threonine 171 each coordinate Na(+).

It belongs to the peptidase T1B family. HslV subfamily. A double ring-shaped homohexamer of HslV is capped on each side by a ring-shaped HslU homohexamer. The assembly of the HslU/HslV complex is dependent on binding of ATP.

The protein resides in the cytoplasm. The catalysed reaction is ATP-dependent cleavage of peptide bonds with broad specificity.. Allosterically activated by HslU binding. Functionally, protease subunit of a proteasome-like degradation complex believed to be a general protein degrading machinery. The sequence is that of ATP-dependent protease subunit HslV from Helicobacter pylori (strain J99 / ATCC 700824) (Campylobacter pylori J99).